A 247-amino-acid polypeptide reads, in one-letter code: Adenosylcobinamide-GDP ribazoletransferase (247 aa).

Transmembrane regions (helical) follow at residues 34 to 54 (IITF…VFMV), 59 to 79 (CGVP…TGGF), 113 to 133 (GGLA…ELAL), 138 to 158 (ILAS…LLMY), and 194 to 214 (VLLP…AIFI).

Belongs to the CobS family. Mg(2+) serves as cofactor.

It is found in the cell inner membrane. It carries out the reaction alpha-ribazole + adenosylcob(III)inamide-GDP = adenosylcob(III)alamin + GMP + H(+). It catalyses the reaction alpha-ribazole 5'-phosphate + adenosylcob(III)inamide-GDP = adenosylcob(III)alamin 5'-phosphate + GMP + H(+). It participates in cofactor biosynthesis; adenosylcobalamin biosynthesis; adenosylcobalamin from cob(II)yrinate a,c-diamide: step 7/7. Joins adenosylcobinamide-GDP and alpha-ribazole to generate adenosylcobalamin (Ado-cobalamin). Also synthesizes adenosylcobalamin 5'-phosphate from adenosylcobinamide-GDP and alpha-ribazole 5'-phosphate. This chain is Adenosylcobinamide-GDP ribazoletransferase, found in Escherichia coli (strain 55989 / EAEC).